We begin with the raw amino-acid sequence, 230 residues long: Cytidylate kinase (230 aa).

ATP is bound at residue 12–20 (GPSGAGKGT).

The protein belongs to the cytidylate kinase family. Type 1 subfamily.

It is found in the cytoplasm. The catalysed reaction is CMP + ATP = CDP + ADP. The enzyme catalyses dCMP + ATP = dCDP + ADP. The sequence is that of Cytidylate kinase from Yersinia enterocolitica serotype O:8 / biotype 1B (strain NCTC 13174 / 8081).